Consider the following 140-residue polypeptide: Nucleoside diphosphate kinase (140 aa).

6 residues coordinate ATP: lysine 11, phenylalanine 59, arginine 87, threonine 93, arginine 104, and asparagine 114. Histidine 117 acts as the Pros-phosphohistidine intermediate in catalysis.

It belongs to the NDK family. In terms of assembly, homotetramer. Mg(2+) is required as a cofactor.

The protein localises to the cytoplasm. The enzyme catalyses a 2'-deoxyribonucleoside 5'-diphosphate + ATP = a 2'-deoxyribonucleoside 5'-triphosphate + ADP. It carries out the reaction a ribonucleoside 5'-diphosphate + ATP = a ribonucleoside 5'-triphosphate + ADP. Major role in the synthesis of nucleoside triphosphates other than ATP. The ATP gamma phosphate is transferred to the NDP beta phosphate via a ping-pong mechanism, using a phosphorylated active-site intermediate. The sequence is that of Nucleoside diphosphate kinase from Gluconobacter oxydans (strain 621H) (Gluconobacter suboxydans).